The sequence spans 135 residues: FK506-binding protein 2 (135 aa).

Positions 1-20 (MRVPIITTLLTLALTGLSQA) are cleaved as a signal peptide. In terms of domain architecture, PPIase FKBP-type spans 40–128 (GDTVKMHYRG…IFQTELLEIE (89 aa)). Positions 132-135 (KDEL) match the Prevents secretion from ER motif.

This sequence belongs to the FKBP-type PPIase family. FKBP2 subfamily.

It localises to the endoplasmic reticulum. The catalysed reaction is [protein]-peptidylproline (omega=180) = [protein]-peptidylproline (omega=0). Inhibited by both FK506 and rapamycin. PPIases accelerate the folding of proteins. It catalyzes the cis-trans isomerization of proline imidic peptide bonds in oligopeptides. In Emericella nidulans (strain FGSC A4 / ATCC 38163 / CBS 112.46 / NRRL 194 / M139) (Aspergillus nidulans), this protein is FK506-binding protein 2 (fkbB).